The sequence spans 280 residues: Energy-coupling factor transporter ATP-binding protein EcfA1 (280 aa).

The ABC transporter domain maps to 6 to 241 (LRTENISFQY…SHMLQEIGLD (236 aa)). 40–47 (GQNGSGKS) contributes to the ATP binding site.

It belongs to the ABC transporter superfamily. Energy-coupling factor EcfA family. In terms of assembly, forms a stable energy-coupling factor (ECF) transporter complex composed of 2 membrane-embedded substrate-binding proteins (S component), 2 ATP-binding proteins (A component) and 2 transmembrane proteins (T component).

It localises to the cell membrane. ATP-binding (A) component of a common energy-coupling factor (ECF) ABC-transporter complex. Unlike classic ABC transporters this ECF transporter provides the energy necessary to transport a number of different substrates. The protein is Energy-coupling factor transporter ATP-binding protein EcfA1 of Bacillus cereus (strain ZK / E33L).